Consider the following 224-residue polypeptide: Agamous-like MADS-box protein AGL9 homolog (224 aa).

The 55-residue stretch at 3–57 folds into the MADS-box domain; it reads RGRVELKRIEGKINRQVTFAKRRNGLLKKAYELSVLCDAEVALIIFSNRGKLYEF. A K-box domain is found at 89–179; it reads EISSQQEYLK…KQRLMEGSQL (91 aa).

Flower specific.

Its subcellular location is the nucleus. In terms of biological role, probable transcription factor active in inflorescence development and floral organogenesis. This chain is Agamous-like MADS-box protein AGL9 homolog (TDR5), found in Solanum lycopersicum (Tomato).